Reading from the N-terminus, the 358-residue chain is MLAMASVEELWAKLDGAADCKSLLKNNLTKERYEALKDKKTKFGGTLADCIRSGCLNLDSGVGIYACDPDAYTVFADVLDAVIKEYHKVPELKHPEPEMGDLDKLNFGDLDPSGEYIVSTRVRVGRSHDSYGFPPVLTKQERLKMEEDTKAAFEKFSGELAGKYFPLEGMSKEDQKQMTEDHFLFKDDDRFLRDAGGYNDWCSGRGIFFNTAKNFLVWVNEEDHLRLISMQKGGDLAAVYKRLVVAINTMTASGLSFAKRDGLGYLTFCPSNLGTALRASVHMKIPNLAASPEFKSFCDNLNIQARGIHGEHTESVGGVYDLSNKRRLGLTEYQAVEEMRVGVEACLAKEKELAAAKK.

A Phosphagen kinase N-terminal domain is found at 6 to 88 (SVEELWAKLD…LDAVIKEYHK (83 aa)). 61-65 (GVGIY) contributes to the substrate binding site. The region spanning 116 to 353 (YIVSTRVRVG…EACLAKEKEL (238 aa)) is the Phosphagen kinase C-terminal domain. Residues 119–123 (STRVR) and histidine 182 contribute to the ATP site. Glutamate 222 contributes to the substrate binding site. An ATP-binding site is contributed by arginine 226. Cysteine 269 serves as a coordination point for substrate. ATP contacts are provided by residues 278-282 (RASVH) and 306-311 (RGIHGE). Glutamate 311 serves as a coordination point for substrate.

The protein belongs to the ATP:guanido phosphotransferase family. Monomer.

It catalyses the reaction L-arginine + ATP = N(omega)-phospho-L-arginine + ADP + H(+). This Haliotis madaka (Giant abalone) protein is Arginine kinase.